A 327-amino-acid chain; its full sequence is Movement protein (327 aa).

Residues 297–327 (IASSSSTENELARVSQNIDLLKNKLKEICGE) adopt a coiled-coil conformation.

It belongs to the caulimoviridae movement protein family. Homotrimer, through the coiled-coil domain. Interacts with VAP. May interact (via N-terminus) with host prenylated Rab acceptor protein 1D (PRA1D).

Its subcellular location is the host cell junction. It is found in the host plasmodesma. Its function is as follows. Transports viral genome to neighboring plant cells directly through plasmosdesmata, without any budding. The movement protein allows efficient cell to cell propagation, by bypassing the host cell wall barrier. Acts by forming tubules structures that increase the size exclusion limit (SEL) of plasmodesmata, thereby allowing viral ribonucleocapsids to spread directly to neighboring cells. This chain is Movement protein, found in Cauliflower mosaic virus (strain D/H) (CaMV).